The sequence spans 229 residues: 5'-methylthioadenosine/S-adenosylhomocysteine nucleosidase (229 aa).

E12 acts as the Proton acceptor in catalysis. Residues G78, I152, and 173–174 (ME) each bind substrate. The active-site Proton donor is the D197.

Belongs to the PNP/UDP phosphorylase family. MtnN subfamily.

The catalysed reaction is S-adenosyl-L-homocysteine + H2O = S-(5-deoxy-D-ribos-5-yl)-L-homocysteine + adenine. It carries out the reaction S-methyl-5'-thioadenosine + H2O = 5-(methylsulfanyl)-D-ribose + adenine. It catalyses the reaction 5'-deoxyadenosine + H2O = 5-deoxy-D-ribose + adenine. Its pathway is amino-acid biosynthesis; L-methionine biosynthesis via salvage pathway; S-methyl-5-thio-alpha-D-ribose 1-phosphate from S-methyl-5'-thioadenosine (hydrolase route): step 1/2. Functionally, catalyzes the irreversible cleavage of the glycosidic bond in both 5'-methylthioadenosine (MTA) and S-adenosylhomocysteine (SAH/AdoHcy) to adenine and the corresponding thioribose, 5'-methylthioribose and S-ribosylhomocysteine, respectively. Also cleaves 5'-deoxyadenosine, a toxic by-product of radical S-adenosylmethionine (SAM) enzymes, into 5-deoxyribose and adenine. The sequence is that of 5'-methylthioadenosine/S-adenosylhomocysteine nucleosidase from Mannheimia succiniciproducens (strain KCTC 0769BP / MBEL55E).